The primary structure comprises 598 residues: Nuclear receptor subfamily 4 group A member 2 (598 aa).

Residues 1 to 22 are disordered; the sequence is MPCVQAQYGSSPQGASPASQSY. The segment covering 8-22 has biased composition (low complexity); that stretch reads YGSSPQGASPASQSY. The nuclear receptor DNA-binding region spans 260–335; it reads EGLCAVCGDN…VGMVKEVVRT (76 aa). NR C4-type zinc fingers lie at residues 263 to 283 and 299 to 318; these read CAVC…CEGC and CLAN…CQYC. The short motif at 287-314 is the Bipartite nuclear localization signal (NLS1) element; it reads FKRTVQKNAKYVCLANKNCPVDKRRRNR. The interval 337–361 is disordered; it reads SLKGRRGRLPSKPKSPQEPSPPSPP. The Nuclear localization signal (NLS1) signature appears at 338–350; it reads LKGRRGRLPSKPK. A compositionally biased stretch (pro residues) spans 352–361; that stretch reads PQEPSPPSPP. An NR LBD domain is found at 360-595; sequence PPVSLISALV…AIIDKLFLDT (236 aa). Residues 443-452 carry the nuclear export sequence (NES1) motif; the sequence is FLELFVLRLA. The short motif at 568-577 is the nuclear export sequence (NES2) element; it reads QGLQRIFYLK.

This sequence belongs to the nuclear hormone receptor family. NR4 subfamily. As to quaternary structure, interacts with SFPQ, NCOR2, SIN3A and HADC1. The interaction with NCOR2 increases in the absence of PITX3. Interacts with PER2.

It is found in the cytoplasm. Its subcellular location is the nucleus. In terms of biological role, transcriptional regulator which is important for the differentiation and maintenance of meso-diencephalic dopaminergic (mdDA) neurons during development. It is crucial for expression of a set of genes such as SLC6A3, SLC18A2, TH and DRD2 which are essential for development of mdDA neurons. The protein is Nuclear receptor subfamily 4 group A member 2 (NR4A2) of Bos taurus (Bovine).